Reading from the N-terminus, the 386-residue chain is Heat-inducible transcription repressor HrcA (386 aa).

Belongs to the HrcA family.

Functionally, negative regulator of class I heat shock genes (grpE-dnaK-dnaJ and groELS operons). Prevents heat-shock induction of these operons. The polypeptide is Heat-inducible transcription repressor HrcA (Chlamydia caviae (strain ATCC VR-813 / DSM 19441 / 03DC25 / GPIC) (Chlamydophila caviae)).